The following is a 232-amino-acid chain: Putative homeobox protein NANOG2 (232 aa).

A disordered region spans residues 1–39; it reads MDLPIQDSHDSSTSPKGKQPTTAEKSATKKEDKVPVKKQ. The segment covering 11 to 25 has biased composition (polar residues); it reads SSTSPKGKQPTTAEK. Over residues 26–35 the composition is skewed to basic and acidic residues; sequence SATKKEDKVP. Tandem repeats lie at residues 123–127, 128–132, 133–137, 143–147, 148–152, 153–157, 158–162, and 163–167. Residues 123 to 167 are 8 X repeats starting with a Trp in each unit; sequence WSNQTWNNSTWSNQTQNIQSWSNHSWNTQTWCTQSWNNQAWNSPF. The segment at 123–167 is sufficient for transactivation activity; sequence WSNQTWNNSTWSNQTQNIQSWSNHSWNTQTWCTQSWNNQAWNSPF. Residues 168 to 232 form a sufficient for strong transactivation activity region; sequence YNCGEESLQS…YSTNMXXEDV (65 aa).

It belongs to the Nanog homeobox family.

It is found in the nucleus. Its function is as follows. Probable transcriptional regulator. This chain is Putative homeobox protein NANOG2 (NANOGP1), found in Pan paniscus (Pygmy chimpanzee).